The sequence spans 276 residues: NADPH-dependent 7-cyano-7-deazaguanine reductase (276 aa).

83–85 (IES) contacts substrate. Residue 85 to 86 (SK) participates in NADPH binding. The active-site Thioimide intermediate is the Cys-184. Asp-191 serves as the catalytic Proton donor. 223 to 224 (HE) serves as a coordination point for substrate. 252 to 253 (RG) is a binding site for NADPH.

It belongs to the GTP cyclohydrolase I family. QueF type 2 subfamily. Homodimer.

The protein localises to the cytoplasm. It catalyses the reaction 7-aminomethyl-7-carbaguanine + 2 NADP(+) = 7-cyano-7-deazaguanine + 2 NADPH + 3 H(+). It participates in tRNA modification; tRNA-queuosine biosynthesis. Catalyzes the NADPH-dependent reduction of 7-cyano-7-deazaguanine (preQ0) to 7-aminomethyl-7-deazaguanine (preQ1). This chain is NADPH-dependent 7-cyano-7-deazaguanine reductase, found in Ectopseudomonas mendocina (strain ymp) (Pseudomonas mendocina).